A 200-amino-acid polypeptide reads, in one-letter code: MQIVMFDRQSIFIHGMKISLQQRIPGVSIQGASQADELWQKLESYPEALVMLDGDQDGEFCYWLLQKTVVQFPEVKVLITATDCNKRWLQEVIHFNVLAIVPRDSTVETFALAVNSAAMGMMFLPGDWRTTPEKDIKDLKSLSARQREILTMLAAGESNKEIGRALNISTGTVKAHLESLYRRLEVKNRTQAAMMLNISS.

The region spanning 135–200 is the HTH luxR-type domain; sequence DIKDLKSLSA…QAAMMLNISS (66 aa). Residues 159-178 constitute a DNA-binding region (H-T-H motif); sequence NKEIGRALNISTGTVKAHLE.

The chain is Putative HTH-type transcriptional regulator YhjB (yhjB) from Escherichia coli (strain K12).